Here is an 84-residue protein sequence, read N- to C-terminus: CDC42 small effector protein 2 (84 aa).

Residues Cys10 and Cys11 are each lipidated (S-palmitoyl cysteine). The region spanning 29 to 42 (IGEPTNFVHTAHVG) is the CRIB domain. Ser43 and Ser52 each carry phosphoserine.

The protein belongs to the CDC42SE/SPEC family. As to quaternary structure, interacts with CDC42 (in GTP-bound form). Interacts weakly with RAC1 and not at all with RHOA. As to expression, widely expressed. Expressed at higher level in T-lymphocytes. Highly expressed in CCRF-CEM T-lymphocytes, Jurkat T-lymphocytes, and Raji B-lymphocytes compared (at protein level).

Its subcellular location is the cytoplasm. It is found in the cytoskeleton. The protein resides in the cell membrane. The protein localises to the cell projection. It localises to the phagocytic cup. Probably involved in the organization of the actin cytoskeleton by acting downstream of CDC42, inducing actin filament assembly. Alters CDC42-induced cell shape changes. In activated T-cells, may play a role in CDC42-mediated F-actin accumulation at the immunological synapse. May play a role in early contractile events in phagocytosis in macrophages. This is CDC42 small effector protein 2 (CDC42SE2) from Homo sapiens (Human).